The sequence spans 570 residues: Multidrug and toxin extrusion protein 1 (570 aa).

Methionine 1 is modified (N-acetylmethionine). Topologically, residues 1 to 37 (MEAPEEPAPVRGGPEATLEIHGSRFLRLSAFREELRA) are cytoplasmic. The helical transmembrane segment at 38–58 (LLVLAGPAFLVQLMVFLISFI) threads the bilayer. Residues 59 to 72 (SSVFCGHLGKLELD) are Extracellular-facing. The helical transmembrane segment at 73–93 (AVTLAIAVINVTGVSVGFGLS) threads the bilayer. Over 94–120 (SACDTLISQTYGSQNLKHVGVILQRSA) the chain is Cytoplasmic. The chain crosses the membrane as a helical span at residues 121 to 141 (LILLLCCFPCWALFLNTQHIL). The Extracellular segment spans residues 142 to 152 (LLFRQDPDVSR). Residues 153–173 (LTQTYVTIFIPALPATFLYML) traverse the membrane as a helical segment. The Cytoplasmic segment spans residues 174–176 (QVK). The chain crosses the membrane as a helical span at residues 177-197 (YLLNQGIVLPQIVTGVAANLV). At 198–216 (NALANYLFLHQLHLGAIGS) the chain is on the extracellular side. A helical membrane pass occupies residues 217-237 (ALANLISQYTLALLLFFYILG). Residues 238-251 (KKLHQATWGGWSLE) lie on the Cytoplasmic side of the membrane. A helical membrane pass occupies residues 252–272 (CLQDWASFLHLAVPSMLMLCM). Residues 273-295 (EWWAYEVGSFLSGILGMVELGAQ) lie on the Extracellular side of the membrane. The chain crosses the membrane as a helical span at residues 296–316 (SIVYELAIIVYMVPAGFSVAA). Residues 317 to 336 (SVRVGNALGAGDMEQARKSS) lie on the Cytoplasmic side of the membrane. A helical transmembrane segment spans residues 337–357 (TVSLLITVLFAVAFSVLLLSC). Residues 358-370 (KDHVGYIFTTDRD) are Extracellular-facing. A helical transmembrane segment spans residues 371–391 (IINLVAQVVPIYAVSHLFEAL). The Cytoplasmic portion of the chain corresponds to 392 to 408 (ACTSGGVLRGSGNQKVG). The helical transmembrane segment at 409–429 (AIVNTIGYYVVGLPIGIALMF) threads the bilayer. Topologically, residues 430–437 (ATKLGVMG) are extracellular. Residues 438–458 (LWSGIIICTVFQAVCFLGFII) traverse the membrane as a helical segment. The Cytoplasmic segment spans residues 459–546 (QLNWKKACQQ…LSRKQLVLRR (88 aa)). A disordered region spans residues 508–534 (DVGKTGETQSDQQMRQEEPLPEHPQDS). Residues 521–533 (MRQEEPLPEHPQD) show a composition bias toward basic and acidic residues. Residues 547–567 (GLLLLGVFLILLVGILVRFYV) traverse the membrane as a helical segment. At 568 to 570 (RIQ) the chain is on the extracellular side.

This sequence belongs to the multi antimicrobial extrusion (MATE) (TC 2.A.66.1) family.

Its subcellular location is the cell membrane. The protein resides in the apical cell membrane. The catalysed reaction is thiamine(out) + H(+)(in) = thiamine(in) + H(+)(out). The enzyme catalyses estrone 3-sulfate(in) + H(+)(out) = estrone 3-sulfate(out) + H(+)(in). It carries out the reaction creatinine(in) + H(+)(out) = creatinine(out) + H(+)(in). It catalyses the reaction agmatine(in) + H(+)(out) = agmatine(out) + H(+)(in). In terms of biological role, multidrug efflux pump that functions as a H(+)/organic cation antiporter. Plays a physiological role in the excretion of cationic compounds including endogenous metabolites, drugs, toxins through the kidney and liver, into urine and bile respectively. Mediates the efflux of endogenous compounds such as creatinine, vitamin B1/thiamine, agmatine and estrone-3-sulfate. May also contribute to regulate the transport of cationic compounds in testis across the blood-testis-barrier. This Pongo abelii (Sumatran orangutan) protein is Multidrug and toxin extrusion protein 1 (SLC47A1).